The chain runs to 510 residues: Maturase K (510 aa).

It belongs to the intron maturase 2 family. MatK subfamily.

The protein localises to the plastid. It localises to the chloroplast. Functionally, usually encoded in the trnK tRNA gene intron. Probably assists in splicing its own and other chloroplast group II introns. The polypeptide is Maturase K (Spirodela intermedia (Intermediate duckweed)).